A 177-amino-acid polypeptide reads, in one-letter code: RNA pyrophosphohydrolase (177 aa).

The Nudix hydrolase domain occupies 6–149 (GYRPNVGIVI…KRDVYRRVMK (144 aa)). A Nudix box motif is present at residues 38–59 (GGINPGESAEQAMYRELFEEVG).

This sequence belongs to the Nudix hydrolase family. RppH subfamily. It depends on a divalent metal cation as a cofactor.

Accelerates the degradation of transcripts by removing pyrophosphate from the 5'-end of triphosphorylated RNA, leading to a more labile monophosphorylated state that can stimulate subsequent ribonuclease cleavage. This is RNA pyrophosphohydrolase from Pectobacterium carotovorum subsp. carotovorum (strain PC1).